Reading from the N-terminus, the 450-residue chain is UDP-N-acetylmuramoylalanine--D-glutamate ligase (450 aa).

An ATP-binding site is contributed by 119 to 125 (GTNGKTT).

The protein belongs to the MurCDEF family.

The protein localises to the cytoplasm. It carries out the reaction UDP-N-acetyl-alpha-D-muramoyl-L-alanine + D-glutamate + ATP = UDP-N-acetyl-alpha-D-muramoyl-L-alanyl-D-glutamate + ADP + phosphate + H(+). Its pathway is cell wall biogenesis; peptidoglycan biosynthesis. Functionally, cell wall formation. Catalyzes the addition of glutamate to the nucleotide precursor UDP-N-acetylmuramoyl-L-alanine (UMA). The sequence is that of UDP-N-acetylmuramoylalanine--D-glutamate ligase from Lactococcus lactis subsp. lactis (strain IL1403) (Streptococcus lactis).